The primary structure comprises 478 residues: Noelin-3 (478 aa).

Positions 1-23 (MSAPLLKLGAVLSTMAMISNWMS) are cleaved as a signal peptide. N-linked (GlcNAc...) asparagine glycosylation is found at Asn-33, Asn-95, Asn-179, Asn-299, and Asn-465. The stretch at 77 to 217 (CSRDAKSRQL…TRLRDCMKKL (141 aa)) forms a coiled coil. Positions 218-470 (TCGKLMKITG…QVLFNVTLFH (253 aa)) constitute an Olfactomedin-like domain. Cys-219 and Cys-401 form a disulfide bridge.

As to quaternary structure, peripherally associated with AMPAR complex. AMPAR complex consists of an inner core made of 4 pore-forming GluA/GRIA proteins (GRIA1, GRIA2, GRIA3 and GRIA4) and 4 major auxiliary subunits arranged in a twofold symmetry. One of the two pairs of distinct binding sites is occupied either by CNIH2, CNIH3 or CACNG2, CACNG3. The other harbors CACNG2, CACNG3, CACNG4, CACNG8 or GSG1L. This inner core of AMPAR complex is complemented by outer core constituents binding directly to the GluA/GRIA proteins at sites distinct from the interaction sites of the inner core constituents. Outer core constituents include at least PRRT1, PRRT2, CKAMP44/SHISA9, FRRS1L and NRN1. The proteins of the inner and outer core serve as a platform for other, more peripherally associated AMPAR constituents, including OLFM3. Alone or in combination, these auxiliary subunits control the gating and pharmacology of the AMPAR complex and profoundly impact their biogenesis and protein processing. Homodimer. Interacts with MYOC. Interacts with OLFM2. In terms of tissue distribution, expressed in the brain (at protein level). Also expressed in the retina, mainly in the ganglion cell layer and in the amacrine cell subregion of the inner nuclear layer. Expressed at high levels in the epithelial cells of the posterior iris and the ciliary body and, at lower levels, in the trabecular meshwork. Isoform 2 preferentially expressed in retina and brain, while isoform 1 preferentially expressed in the tissues of the eye angle.

It is found in the secreted. It localises to the synapse. This is Noelin-3 (Olfm3) from Rattus norvegicus (Rat).